We begin with the raw amino-acid sequence, 306 residues long: UDP-3-O-acyl-N-acetylglucosamine deacetylase (306 aa).

Zn(2+) contacts are provided by histidine 79, histidine 238, and aspartate 242. The active-site Proton donor is histidine 265.

It belongs to the LpxC family. The cofactor is Zn(2+).

It carries out the reaction a UDP-3-O-[(3R)-3-hydroxyacyl]-N-acetyl-alpha-D-glucosamine + H2O = a UDP-3-O-[(3R)-3-hydroxyacyl]-alpha-D-glucosamine + acetate. Its pathway is glycolipid biosynthesis; lipid IV(A) biosynthesis; lipid IV(A) from (3R)-3-hydroxytetradecanoyl-[acyl-carrier-protein] and UDP-N-acetyl-alpha-D-glucosamine: step 2/6. Functionally, catalyzes the hydrolysis of UDP-3-O-myristoyl-N-acetylglucosamine to form UDP-3-O-myristoylglucosamine and acetate, the committed step in lipid A biosynthesis. The sequence is that of UDP-3-O-acyl-N-acetylglucosamine deacetylase from Shewanella denitrificans (strain OS217 / ATCC BAA-1090 / DSM 15013).